Consider the following 594-residue polypeptide: Elongation factor 4 (594 aa).

Residues 2 to 184 form the tr-type G domain; it reads KNIRNFSIIA…TIVAKVPAPE (183 aa). Residues 14–19 and 131–134 each bind GTP; these read DHGKST and NKID.

This sequence belongs to the TRAFAC class translation factor GTPase superfamily. Classic translation factor GTPase family. LepA subfamily.

The protein resides in the cell inner membrane. It carries out the reaction GTP + H2O = GDP + phosphate + H(+). Its function is as follows. Required for accurate and efficient protein synthesis under certain stress conditions. May act as a fidelity factor of the translation reaction, by catalyzing a one-codon backward translocation of tRNAs on improperly translocated ribosomes. Back-translocation proceeds from a post-translocation (POST) complex to a pre-translocation (PRE) complex, thus giving elongation factor G a second chance to translocate the tRNAs correctly. Binds to ribosomes in a GTP-dependent manner. The protein is Elongation factor 4 of Francisella philomiragia subsp. philomiragia (strain ATCC 25017 / CCUG 19701 / FSC 153 / O#319-036).